Here is a 221-residue protein sequence, read N- to C-terminus: Glutathione S-transferase (221 aa).

The GST N-terminal domain occupies 3–83 (GKPVLHYANT…YIAGKYNLYG (81 aa)). Glutathione-binding positions include Y9, K45, 54 to 55 (QV), and 67 to 68 (QT). The GST C-terminal domain occupies 85 to 208 (DLKERALIDM…QPGSQRKPRL (124 aa)).

Belongs to the GST superfamily. Alpha family. As to quaternary structure, homodimer or heterodimer of GSTA1 and GSTA2.

The catalysed reaction is RX + glutathione = an S-substituted glutathione + a halide anion + H(+). The enzyme catalyses prostaglandin A2 + glutathione = prostaglandin A2-S-(R)-glutathione. It carries out the reaction prostaglandin J2 + glutathione = prostaglandin J2-S-(R)-glutathione. It catalyses the reaction (13S)-hydroperoxy-(9Z,11E)-octadecadienoate + 2 glutathione = (13S)-hydroxy-(9Z,11E)-octadecadienoate + glutathione disulfide + H2O. The catalysed reaction is androst-5-ene-3,17-dione = androst-4-ene-3,17-dione. Glutathione S-transferase that catalyzes the nucleophilic attack of the sulfur atom of glutathione on the electrophilic groups of a wide range of exogenous and endogenous compounds. Involved in the formation of glutathione conjugates of both prostaglandin A2 (PGA2) and prostaglandin J2 (PGJ2). It also catalyzes the isomerization of D5-androstene-3,17-dione (AD) into D4-androstene-3,17-dione and may therefore play an important role in hormone biosynthesis. Through its glutathione-dependent peroxidase activity toward the fatty acid hydroperoxide (13S)-hydroperoxy-(9Z,11E)-octadecadienoate/13-HPODE it is also involved in the metabolism of oxidized linoleic acid. The chain is Glutathione S-transferase from Gallus gallus (Chicken).